A 551-amino-acid chain; its full sequence is Hydroxylamine reductase (551 aa).

[2Fe-2S] cluster is bound by residues cysteine 3, cysteine 6, cysteine 18, and cysteine 25. Positions 249, 273, 317, 405, 433, 459, 493, and 495 each coordinate hybrid [4Fe-2O-2S] cluster. Cysteine 405 carries the post-translational modification Cysteine persulfide.

This sequence belongs to the HCP family. [2Fe-2S] cluster is required as a cofactor. The cofactor is hybrid [4Fe-2O-2S] cluster.

It is found in the cytoplasm. It catalyses the reaction A + NH4(+) + H2O = hydroxylamine + AH2 + H(+). Functionally, catalyzes the reduction of hydroxylamine to form NH(3) and H(2)O. This chain is Hydroxylamine reductase, found in Actinobacillus pleuropneumoniae serotype 5b (strain L20).